A 447-amino-acid polypeptide reads, in one-letter code: Putative branched-chain amino acid carrier protein SSP1343 (447 aa).

The next 12 helical transmembrane spans lie at 6 to 26 (WIIG…IFPP), 40 to 60 (ILAF…VGAL), 74 to 94 (PKFS…LFAI), 116 to 136 (LALF…CINP), 143 to 163 (IGSL…VKGF), 192 to 212 (GYLT…VNAV), 228 to 248 (LMAG…LGYI), 289 to 309 (LLGI…VVAV), 324 to 344 (IYVI…LNSV), 349 to 369 (VPVL…ILLA), 381 to 401 (IPVA…QGWI), and 416 to 436 (LEWF…AAMV).

It belongs to the branched chain amino acid transporter family.

It localises to the cell membrane. Its function is as follows. Component of the transport system for branched-chain amino acids (leucine, isoleucine and valine), which is coupled to a proton motive force. This Staphylococcus saprophyticus subsp. saprophyticus (strain ATCC 15305 / DSM 20229 / NCIMB 8711 / NCTC 7292 / S-41) protein is Putative branched-chain amino acid carrier protein SSP1343.